A 319-amino-acid polypeptide reads, in one-letter code: Aminoimidazole riboside kinase (319 aa).

Residues D16, G31, and Y101 each coordinate 5-amino-1-(beta-D-ribosyl)imidazole. 158–160 is a binding site for ATP; that stretch reads DVN. Residue R162 participates in 5-amino-1-(beta-D-ribosyl)imidazole binding. 3 residues coordinate K(+): A180, A181, and A183. ATP-binding residues include K187 and E192. Residue G213 participates in K(+) binding. 220-225 is an ATP binding site; the sequence is SLGADG. Positions 246 and 248 each coordinate K(+). D252 contacts 5-amino-1-(beta-D-ribosyl)imidazole. D252 functions as the Proton acceptor in the catalytic mechanism. ATP is bound at residue N281. K(+)-binding residues include A287, A290, and G292.

Belongs to the carbohydrate kinase PfkB family. As to quaternary structure, homodimer.

It carries out the reaction 5-amino-1-(beta-D-ribosyl)imidazole + ATP = 5-amino-1-(5-phospho-beta-D-ribosyl)imidazole + ADP + H(+). With respect to regulation, potassium may regulate kinase activity. Phosphorylates 5-amino-1-(beta-D-ribosyl)imidazole (AIRs) to form 5-amino-1-(5-phospho-beta-D-ribosyl)imidazole (AIR), an important intermediate in the purine and thiamine biosynthetic pathways. It allows the use of exogenous aminoimidazole riboside (AIRs) to satisfy the cellular requirement for purines and thiamine. The protein is Aminoimidazole riboside kinase of Salmonella typhimurium (strain LT2 / SGSC1412 / ATCC 700720).